The chain runs to 540 residues: Mitochondrial distribution and morphology protein 34 (540 aa).

Residues 1–208 enclose the SMP-LTD domain; that stretch reads MSFKFNSGTF…LPSVIFNMSQ (208 aa). Disordered regions lie at residues 26–51 and 379–399; these read ALNP…KKPK and RSKS…SGSL. Residues 35-44 are compositionally biased toward polar residues; the sequence is PESTSGQDGS.

This sequence belongs to the MDM34 family. In terms of assembly, component of the ER-mitochondria encounter structure (ERMES) or MDM complex, composed of MMM1, MDM10, MDM12 and MDM34.

It localises to the mitochondrion outer membrane. In terms of biological role, component of the ERMES/MDM complex, which serves as a molecular tether to connect the endoplasmic reticulum (ER) and mitochondria. Components of this complex are involved in the control of mitochondrial shape and protein biogenesis, and function in nonvesicular lipid trafficking between the ER and mitochondria. MDM34 is required for the interaction of the ER-resident membrane protein MMM1 and the outer mitochondrial membrane-resident beta-barrel protein MDM10. The sequence is that of Mitochondrial distribution and morphology protein 34 from Kluyveromyces lactis (strain ATCC 8585 / CBS 2359 / DSM 70799 / NBRC 1267 / NRRL Y-1140 / WM37) (Yeast).